We begin with the raw amino-acid sequence, 165 residues long: Protein SprT (165 aa).

The 142-residue stretch at 22–163 (LAQANLKLDR…RCVHCGEPLV (142 aa)) folds into the SprT-like domain. His78 lines the Zn(2+) pocket. The active site involves Glu79. His82 lines the Zn(2+) pocket.

It belongs to the SprT family. It depends on Zn(2+) as a cofactor.

It localises to the cytoplasm. The polypeptide is Protein SprT (Salmonella paratyphi A (strain ATCC 9150 / SARB42)).